Reading from the N-terminus, the 515-residue chain is Putative pumilio homolog 8, chloroplastic (515 aa).

A disordered region spans residues 1–33; that stretch reads MMRGEFGEASSLSRSPSSPLQTEPHPQSPKFYR. Residues 1–70 constitute a chloroplast transit peptide; sequence MMRGEFGEAS…LSSYFSNGLC (70 aa). Low complexity predominate over residues 10-20; it reads SSLSRSPSSPL. The PUM-HD domain maps to 174-515; that stretch reads SGVGALFDHQ…RIFSRNLLKN (342 aa). Pumilio repeat units lie at residues 198–233, 234–269, 270–308, 310–345, 346–381, 382–417, 418–456, and 457–490; these read EFQG…VIFS, EVIP…QIIL, MVTS…SLVK, ALRP…FIFE, DATK…KLVT, EISR…AMLA, QLKG…ELIS, and VPHF…TLVE.

It is found in the plastid. The protein localises to the chloroplast. It localises to the cytoplasm. Its function is as follows. Sequence-specific RNA-binding protein that regulates translation and mRNA stability by binding the 3'-UTR of target mRNAs. The sequence is that of Putative pumilio homolog 8, chloroplastic (APUM8) from Arabidopsis thaliana (Mouse-ear cress).